Reading from the N-terminus, the 410-residue chain is Chorismate synthase (410 aa).

NADP(+) contacts are provided by Arg-40 and Arg-46. Residues 129 to 131 (RSS), 257 to 258 (QA), Gly-302, 317 to 321 (KPISS), and Arg-343 contribute to the FMN site.

It belongs to the chorismate synthase family. As to quaternary structure, homotetramer. It depends on FMNH2 as a cofactor.

It catalyses the reaction 5-O-(1-carboxyvinyl)-3-phosphoshikimate = chorismate + phosphate. Its pathway is metabolic intermediate biosynthesis; chorismate biosynthesis; chorismate from D-erythrose 4-phosphate and phosphoenolpyruvate: step 7/7. Its function is as follows. Catalyzes the anti-1,4-elimination of the C-3 phosphate and the C-6 proR hydrogen from 5-enolpyruvylshikimate-3-phosphate (EPSP) to yield chorismate, which is the branch point compound that serves as the starting substrate for the three terminal pathways of aromatic amino acid biosynthesis. This reaction introduces a second double bond into the aromatic ring system. This Chlorobaculum parvum (strain DSM 263 / NCIMB 8327) (Chlorobium vibrioforme subsp. thiosulfatophilum) protein is Chorismate synthase.